Consider the following 246-residue polypeptide: 3-deoxy-manno-octulosonate cytidylyltransferase (246 aa).

This sequence belongs to the KdsB family.

It localises to the cytoplasm. It carries out the reaction 3-deoxy-alpha-D-manno-oct-2-ulosonate + CTP = CMP-3-deoxy-beta-D-manno-octulosonate + diphosphate. The protein operates within nucleotide-sugar biosynthesis; CMP-3-deoxy-D-manno-octulosonate biosynthesis; CMP-3-deoxy-D-manno-octulosonate from 3-deoxy-D-manno-octulosonate and CTP: step 1/1. It functions in the pathway bacterial outer membrane biogenesis; lipopolysaccharide biosynthesis. In terms of biological role, activates KDO (a required 8-carbon sugar) for incorporation into bacterial lipopolysaccharide in Gram-negative bacteria. The protein is 3-deoxy-manno-octulosonate cytidylyltransferase of Rickettsia africae (strain ESF-5).